The chain runs to 732 residues: Phosphoribosylformylglycinamidine synthase subunit PurL (732 aa).

The active site involves H42. ATP-binding residues include Y45 and K84. E86 is a Mg(2+) binding site. Substrate-binding positions include 87–90 (SHNH) and R109. The active-site Proton acceptor is the H88. A Mg(2+)-binding site is contributed by D110. Q238 is a substrate binding site. Residue D266 participates in Mg(2+) binding. 310–312 (ESQ) lines the substrate pocket. ATP is bound by residues D496 and G533. N534 lines the Mg(2+) pocket. Residue S536 coordinates substrate.

This sequence belongs to the FGAMS family. In terms of assembly, monomer. Part of the FGAM synthase complex composed of 1 PurL, 1 PurQ and 2 PurS subunits.

Its subcellular location is the cytoplasm. The catalysed reaction is N(2)-formyl-N(1)-(5-phospho-beta-D-ribosyl)glycinamide + L-glutamine + ATP + H2O = 2-formamido-N(1)-(5-O-phospho-beta-D-ribosyl)acetamidine + L-glutamate + ADP + phosphate + H(+). It participates in purine metabolism; IMP biosynthesis via de novo pathway; 5-amino-1-(5-phospho-D-ribosyl)imidazole from N(2)-formyl-N(1)-(5-phospho-D-ribosyl)glycinamide: step 1/2. Part of the phosphoribosylformylglycinamidine synthase complex involved in the purines biosynthetic pathway. Catalyzes the ATP-dependent conversion of formylglycinamide ribonucleotide (FGAR) and glutamine to yield formylglycinamidine ribonucleotide (FGAM) and glutamate. The FGAM synthase complex is composed of three subunits. PurQ produces an ammonia molecule by converting glutamine to glutamate. PurL transfers the ammonia molecule to FGAR to form FGAM in an ATP-dependent manner. PurS interacts with PurQ and PurL and is thought to assist in the transfer of the ammonia molecule from PurQ to PurL. In Campylobacter hominis (strain ATCC BAA-381 / DSM 21671 / CCUG 45161 / LMG 19568 / NCTC 13146 / CH001A), this protein is Phosphoribosylformylglycinamidine synthase subunit PurL.